The following is a 376-amino-acid chain: Alanine racemase (376 aa).

Residue Lys-36 is the Proton acceptor; specific for D-alanine of the active site. Position 36 is an N6-(pyridoxal phosphate)lysine (Lys-36). A substrate-binding site is contributed by Arg-134. The active-site Proton acceptor; specific for L-alanine is the Tyr-266. Residue Met-314 participates in substrate binding.

It belongs to the alanine racemase family. The cofactor is pyridoxal 5'-phosphate.

The enzyme catalyses L-alanine = D-alanine. Its pathway is amino-acid biosynthesis; D-alanine biosynthesis; D-alanine from L-alanine: step 1/1. Catalyzes the interconversion of L-alanine and D-alanine. May also act on other amino acids. The protein is Alanine racemase (alr) of Nitratidesulfovibrio vulgaris (strain ATCC 29579 / DSM 644 / CCUG 34227 / NCIMB 8303 / VKM B-1760 / Hildenborough) (Desulfovibrio vulgaris).